The chain runs to 148 residues: Lysozyme C-2 (148 aa).

The N-terminal stretch at 1–18 is a signal peptide; sequence MKTLLTLGLLLLSVTAQA. In terms of domain architecture, C-type lysozyme spans 19–148; that stretch reads KVYERCEFAR…LSQYIRNCGV (130 aa). Cystine bridges form between C24–C146, C48–C134, C83–C99, and C95–C113. Residues E53 and D71 contribute to the active site.

Belongs to the glycosyl hydrolase 22 family. As to quaternary structure, monomer. In terms of tissue distribution, expressed weakly in myeloblasts, moderately in immature macrophages, and strongly in both mature macrophages and macrophage-rich tissues.

It localises to the secreted. The enzyme catalyses Hydrolysis of (1-&gt;4)-beta-linkages between N-acetylmuramic acid and N-acetyl-D-glucosamine residues in a peptidoglycan and between N-acetyl-D-glucosamine residues in chitodextrins.. In terms of biological role, lysozymes have primarily a bacteriolytic function; those in tissues and body fluids are associated with the monocyte-macrophage system and enhance the activity of immunoagents. Lyz2 is active against a range of Gram-positive and Gram-negative bacteria. More effective than Lyz1 in killing Gram-negative bacteria. Lyz1 and Lyz2 are equally effective in killing Gram-positive bacteria. The protein is Lysozyme C-2 (Lyz2) of Mus musculus (Mouse).